Reading from the N-terminus, the 400-residue chain is MPFPLASQGSQQSQKTYGITSPISLATPKDTDCTLTQKLIETLKPYGVFEEEDELQHRILSLGKLNNLVKEWIREISELKNLPQSVIENVGGKIFTFGSYRLGVHTKGADIDALCVAPRHVDRSDLFSSFYEKLKQQEEVKDLRSVEEAFVPVIKLCFDGIEIDILFARLALQTIPEDLDLRDDSLLKNLDIRCIRSLNGCRVTDEILHLVPNIDSFRLTLRAIKLWAKRHNIYSNILGFLGGVSWAMLVARTCQLYPNAIASTLVHKFFLVFSKWEWPNPVLLKQPEECNLNLPVWDPRVNPSDRYHLMPIITPAYPQQNSTYNVSVSTRAVMVEEFKQGLAITDEILLLKAEWSKLFDAPNFFQKYKYVFYNLLAMFAWGEIINKNKKRCYTLKKKKK.

ATP is bound by residues 97 to 99 (FGS), Thr-106, 110 to 112 (DID), Asp-164, Lys-225, Tyr-234, and 243 to 244 (GV). Mg(2+) contacts are provided by Asp-110, Asp-112, and Asp-164. The Nuclear localization signal motif lies at 382 to 390 (GEIINKNKK).

The protein belongs to the poly(A) polymerase family. As to quaternary structure, monomer. Mg(2+) serves as cofactor. Mn(2+) is required as a cofactor.

The protein resides in the nucleus. It catalyses the reaction RNA(n) + ATP = RNA(n)-3'-adenine ribonucleotide + diphosphate. Polymerase that creates the 3'-poly(A) tail of mRNA's. May acquire specificity through interaction with a cleavage and polyadenylation factor (CPSF). In Xenopus laevis (African clawed frog), this protein is Poly(A) polymerase type 3.